Consider the following 201-residue polypeptide: dTTP/UTP pyrophosphatase (201 aa).

Catalysis depends on D76, which acts as the Proton acceptor.

The protein belongs to the Maf family. YhdE subfamily. A divalent metal cation is required as a cofactor.

The protein resides in the cytoplasm. The enzyme catalyses dTTP + H2O = dTMP + diphosphate + H(+). It catalyses the reaction UTP + H2O = UMP + diphosphate + H(+). In terms of biological role, nucleoside triphosphate pyrophosphatase that hydrolyzes dTTP and UTP. May have a dual role in cell division arrest and in preventing the incorporation of modified nucleotides into cellular nucleic acids. This is dTTP/UTP pyrophosphatase from Neisseria meningitidis serogroup A / serotype 4A (strain DSM 15465 / Z2491).